A 904-amino-acid chain; its full sequence is Thiamine diphosphate dependent-3-acetyloctanal synthase PigD (904 aa).

A disordered region spans residues 879–904 (RKAWAAQQPESTSTAFDQDPTQEATS). Residues 886-904 (QPESTSTAFDQDPTQEATS) show a composition bias toward polar residues.

Belongs to the TPP enzyme family. Thiamine diphosphate serves as cofactor.

It catalyses the reaction (2E)-octenal + pyruvate + H(+) = (S)-3-acetyloctanal + CO2. It participates in antibiotic biosynthesis; prodigiosin biosynthesis. In terms of biological role, involved in the biosynthesis of 2-methyl-3-n-amyl-pyrrole (MAP), one of the terminal products involved in the biosynthesis of the red antibiotic prodigiosin (Pig). Catalyzes the decarboxylation of pyruvate, followed by the modification of the resulting two-carbon fragment acetaldehyde at the C3 position of the 2-octenal (1,2-addition of acetaldehyde) giving 3-acetyloctanal. In vitro, it can act on a number of alpha,beta-unsaturated carbonyl compounds, including aldehydes and ketones, and can catalyze both 1,2-addition and Stetter-type 1,4-addition depending on the substrate. This Serratia marcescens protein is Thiamine diphosphate dependent-3-acetyloctanal synthase PigD.